The sequence spans 652 residues: ATP-dependent zinc metalloprotease FtsH 1 (652 aa).

Over 1-9 the chain is Cytoplasmic; sequence MSDNKWLRN. Residues 10–30 form a helical membrane-spanning segment; sequence GFVWMILIIAAIAVWVTFVQG. At 31 to 110 the chain is on the extracellular side; that stretch reads GRGGATITTQ…QTHRASQWGN (80 aa). Residues 111 to 131 form a helical membrane-spanning segment; the sequence is VLGTLTFLLPTLFLIGVIIFM. Topologically, residues 132-652 are cytoplasmic; that stretch reads MRQAQGTNNQ…VPHIKPQPAS (521 aa). 203-210 is a binding site for ATP; sequence GPPGTGKT. His-425 serves as a coordination point for Zn(2+). Glu-426 is a catalytic residue. His-429 and Asp-501 together coordinate Zn(2+). The interval 623-652 is disordered; the sequence is IATPETARPDSPSEARPAAPVPHIKPQPAS. Residues 641 to 652 show a composition bias toward pro residues; that stretch reads APVPHIKPQPAS.

This sequence in the central section; belongs to the AAA ATPase family. It in the C-terminal section; belongs to the peptidase M41 family. Homohexamer. Zn(2+) is required as a cofactor.

The protein localises to the cell membrane. Its function is as follows. Acts as a processive, ATP-dependent zinc metallopeptidase for both cytoplasmic and membrane proteins. Plays a role in the quality control of integral membrane proteins. The protein is ATP-dependent zinc metalloprotease FtsH 1 of Thermomicrobium roseum (strain ATCC 27502 / DSM 5159 / P-2).